Consider the following 208-residue polypeptide: UPF0316 protein SERP1448 (208 aa).

The next 3 helical transmembrane spans lie at 8-28 (PWLM…FLTM), 40-60 (VAAV…GLVM), and 66-86 (IQNI…GMKI).

It belongs to the UPF0316 family.

It is found in the cell membrane. In Staphylococcus epidermidis (strain ATCC 35984 / DSM 28319 / BCRC 17069 / CCUG 31568 / BM 3577 / RP62A), this protein is UPF0316 protein SERP1448.